The primary structure comprises 423 residues: MSASAVFILDVKGKPLISRNYKGDVPMTEIDHFMPLLMQREEEGMLAPLLSHGRVHFLWIKHSNLYLVATTLKNANASLVYSFLYKTVEVFCEYFKELEEESIRDNFVIVYELLDELMDFGFPQTTDSKILQEYITQQGNKLETGKSRVPPTVTNAVSWRSEGIKYKKNEVFIDVIESVNLLVNANGSVLLSEIVGTIKLKVFLSGMPELRLGLNDRVLFELTGRSKNKSVELEDVKFHQCVRLSRFDNDRTISFIPPDGDFELMSYRLSTQVRPRVDXESVIEKFSHSRVEIMVKAKGQFKKQSVANGVEISVPVPSDADSPRFKTSVGSAKYVPEKNVVIWSIKSFPGGKEYLMRAHFGLPSVETEEVEGRPPIGVKFEIPYFTVSGIQVRYMKIIEKSGYQALPWVRYITQSGDYQLRTS.

One can recognise an MHD domain in the interval Lys-168–Arg-421.

This sequence belongs to the adaptor complexes medium subunit family. In terms of assembly, adaptor protein complex 1 (AP-1) is a heterotetramer composed of two large adaptins (gamma-type subunit AP1G1 and beta-type subunit AP1B1), a medium adaptin (mu-type subunit AP1M1 or AP1M2) and a small adaptin (sigma-type subunit AP1S1 or AP1S2 or AP1S3). Interacts with P2X4. In terms of processing, phosphorylation of membrane-bound AP1M1/AP1M2 increases its affinity for sorting signals.

Its subcellular location is the golgi apparatus. The protein resides in the cytoplasmic vesicle. The protein localises to the clathrin-coated vesicle membrane. Its function is as follows. Subunit of clathrin-associated adaptor protein complex 1 that plays a role in protein sorting in the trans-Golgi network (TGN) and endosomes. The AP complexes mediate the recruitment of clathrin to membranes and the recognition of sorting signals within the cytosolic tails of transmembrane cargo molecules. This Rattus norvegicus (Rat) protein is AP-1 complex subunit mu-2 (Ap1m2).